Consider the following 348-residue polypeptide: Heat-inducible transcription repressor HrcA (348 aa).

The protein belongs to the HrcA family.

Negative regulator of class I heat shock genes (grpE-dnaK-dnaJ and groELS operons). Prevents heat-shock induction of these operons. The polypeptide is Heat-inducible transcription repressor HrcA (Thermodesulfovibrio yellowstonii (strain ATCC 51303 / DSM 11347 / YP87)).